Reading from the N-terminus, the 129-residue chain is Flagellar assembly factor FliW 2 (129 aa).

This sequence belongs to the FliW family. In terms of assembly, interacts with translational regulator CsrA and flagellin(s).

It localises to the cytoplasm. Functionally, acts as an anti-CsrA protein, binds CsrA and prevents it from repressing translation of its target genes, one of which is flagellin. Binds to flagellin and participates in the assembly of the flagellum. This is Flagellar assembly factor FliW 2 from Helicobacter pylori (strain J99 / ATCC 700824) (Campylobacter pylori J99).